The chain runs to 93 residues: Small ribosomal subunit protein uS19 (93 aa).

Belongs to the universal ribosomal protein uS19 family.

Its function is as follows. Protein S19 forms a complex with S13 that binds strongly to the 16S ribosomal RNA. The chain is Small ribosomal subunit protein uS19 (rpsS) from Mycobacterium leprae (strain TN).